The sequence spans 327 residues: D-threonate 4-phosphate dehydrogenase (327 aa).

The substrate site is built by H139 and T140. Residues H169, H213, and H268 each contribute to the a divalent metal cation site. Residues K276, N285, and R294 each coordinate substrate.

Belongs to the PdxA family. PdxA2 subfamily. As to quaternary structure, homodimer. Requires a divalent metal cation as cofactor.

It carries out the reaction 4-O-phospho-D-threonate + NAD(+) = dihydroxyacetone phosphate + CO2 + NADH. In terms of biological role, catalyzes the NAD-dependent oxidation and subsequent decarboxylation of D-threonate 4-phosphate to produce dihydroxyacetone phosphate (DHAP). Can also use 4-hydroxy-L-threonine 4-phosphate as substrate. The chain is D-threonate 4-phosphate dehydrogenase from Salmonella typhimurium (strain LT2 / SGSC1412 / ATCC 700720).